The primary structure comprises 420 residues: S-adenosylmethionine synthase (420 aa).

ATP is bound at residue His16. Position 18 (Asp18) interacts with Mg(2+). Residue Glu44 participates in K(+) binding. L-methionine contacts are provided by Glu57 and Gln100. The segment at 100-110 is flexible loop; that stretch reads QSPDIAQGVNT. ATP is bound by residues 175 to 177, 251 to 252, Asp260, 266 to 267, Ala283, and Lys287; these read DGK, KF, and RK. L-methionine is bound at residue Asp260. Lys291 is a binding site for L-methionine.

It belongs to the AdoMet synthase family. As to quaternary structure, homotetramer; dimer of dimers. Requires Mg(2+) as cofactor. K(+) serves as cofactor.

It localises to the cytoplasm. The enzyme catalyses L-methionine + ATP + H2O = S-adenosyl-L-methionine + phosphate + diphosphate. It functions in the pathway amino-acid biosynthesis; S-adenosyl-L-methionine biosynthesis; S-adenosyl-L-methionine from L-methionine: step 1/1. Catalyzes the formation of S-adenosylmethionine (AdoMet) from methionine and ATP. The overall synthetic reaction is composed of two sequential steps, AdoMet formation and the subsequent tripolyphosphate hydrolysis which occurs prior to release of AdoMet from the enzyme. The sequence is that of S-adenosylmethionine synthase from Trichormus variabilis (strain ATCC 29413 / PCC 7937) (Anabaena variabilis).